The primary structure comprises 166 residues: UPF0304 protein VF_1794 (166 aa).

This sequence belongs to the UPF0304 family.

The sequence is that of UPF0304 protein VF_1794 from Aliivibrio fischeri (strain ATCC 700601 / ES114) (Vibrio fischeri).